Reading from the N-terminus, the 400-residue chain is Methylthioribose kinase (400 aa).

ATP-binding positions include Asn-40, Lys-57, and Glu-111–Leu-113. Substrate is bound at residue Asp-229. Residue Asp-246–Glu-248 participates in ATP binding. Arg-344 provides a ligand contact to substrate.

This sequence belongs to the methylthioribose kinase family. In terms of assembly, homodimer.

The catalysed reaction is 5-(methylsulfanyl)-D-ribose + ATP = 5-(methylsulfanyl)-alpha-D-ribose 1-phosphate + ADP + H(+). It functions in the pathway amino-acid biosynthesis; L-methionine biosynthesis via salvage pathway; S-methyl-5-thio-alpha-D-ribose 1-phosphate from S-methyl-5'-thioadenosine (hydrolase route): step 2/2. Functionally, catalyzes the phosphorylation of methylthioribose into methylthioribose-1-phosphate. This chain is Methylthioribose kinase, found in Pectobacterium carotovorum subsp. carotovorum (strain PC1).